Here is a 308-residue protein sequence, read N- to C-terminus: Oxygen-dependent coproporphyrinogen-III oxidase (308 aa).

Position 100 (S100) interacts with substrate. Positions 104 and 114 each coordinate a divalent metal cation. H114 acts as the Proton donor in catalysis. N116–R118 provides a ligand contact to substrate. A divalent metal cation contacts are provided by H153 and H183. Positions Y248 to R283 are important for dimerization. G266–R268 serves as a coordination point for substrate.

It belongs to the aerobic coproporphyrinogen-III oxidase family. Homodimer. Requires a divalent metal cation as cofactor.

It is found in the cytoplasm. The enzyme catalyses coproporphyrinogen III + O2 + 2 H(+) = protoporphyrinogen IX + 2 CO2 + 2 H2O. It functions in the pathway porphyrin-containing compound metabolism; protoporphyrin-IX biosynthesis; protoporphyrinogen-IX from coproporphyrinogen-III (O2 route): step 1/1. Functionally, involved in the heme biosynthesis. Catalyzes the aerobic oxidative decarboxylation of propionate groups of rings A and B of coproporphyrinogen-III to yield the vinyl groups in protoporphyrinogen-IX. This chain is Oxygen-dependent coproporphyrinogen-III oxidase, found in Francisella tularensis subsp. novicida (strain U112).